We begin with the raw amino-acid sequence, 89 residues long: Small ribosomal subunit protein uS15 (89 aa).

Belongs to the universal ribosomal protein uS15 family. Part of the 30S ribosomal subunit. Forms a bridge to the 50S subunit in the 70S ribosome, contacting the 23S rRNA.

Its function is as follows. One of the primary rRNA binding proteins, it binds directly to 16S rRNA where it helps nucleate assembly of the platform of the 30S subunit by binding and bridging several RNA helices of the 16S rRNA. Forms an intersubunit bridge (bridge B4) with the 23S rRNA of the 50S subunit in the ribosome. This Treponema denticola (strain ATCC 35405 / DSM 14222 / CIP 103919 / JCM 8153 / KCTC 15104) protein is Small ribosomal subunit protein uS15.